Consider the following 308-residue polypeptide: Adult enhancer factor 1 (308 aa).

2 disordered regions span residues 50–94 (AHMA…PLPF) and 123–143 (QAAA…THLT). The segment covering 56-76 (QQQQQQQQQQQQQHHQQQQQQ) has biased composition (low complexity). Residues 81 to 90 (PSVPPPPTEL) show a composition bias toward pro residues. C2H2-type zinc fingers lie at residues 184-206 (FHCT…VKIH), 212-234 (YKCN…LKIH), 240-262 (YNCN…VKIH), and 268-290 (FECV…IKIH).

Found in all tissues examined including the ovary and the fat body.

The protein localises to the nucleus. Its function is as follows. Transcriptional repressor that binds specifically to fat body-specific enhancers, namely the adult ADH enhancer (AAE) and the enhancer that controls yolk protein gene expression. This chain is Adult enhancer factor 1 (Aef1), found in Drosophila melanogaster (Fruit fly).